The sequence spans 350 residues: tRNA uridine(34) hydroxylase (350 aa).

A Rhodanese domain is found at 146–240 (DDPDAVFIDM…YARRAREQGL (95 aa)). Catalysis depends on Cys200, which acts as the Cysteine persulfide intermediate. Positions 319-328 (RRRRAGRENG) are enriched in basic and acidic residues. The disordered stretch occupies residues 319-350 (RRRRAGRENGNKIFNKSRGRLNSKLSIPDPAE).

This sequence belongs to the TrhO family.

It carries out the reaction uridine(34) in tRNA + AH2 + O2 = 5-hydroxyuridine(34) in tRNA + A + H2O. Catalyzes oxygen-dependent 5-hydroxyuridine (ho5U) modification at position 34 in tRNAs. In Salmonella agona (strain SL483), this protein is tRNA uridine(34) hydroxylase.